The sequence spans 340 residues: Aspartate-semialdehyde dehydrogenase (340 aa).

NADP(+) contacts are provided by residues 11–14 and 39–40; these read TGEV and RS. Phosphate is bound at residue R100. C131 acts as the Acyl-thioester intermediate in catalysis. Q158 lines the substrate pocket. 161 to 162 is a binding site for NADP(+); the sequence is SG. K216 is a binding site for phosphate. R238 serves as a coordination point for substrate. H245 functions as the Proton acceptor in the catalytic mechanism. N318 provides a ligand contact to NADP(+).

This sequence belongs to the aspartate-semialdehyde dehydrogenase family. As to quaternary structure, homodimer.

The catalysed reaction is L-aspartate 4-semialdehyde + phosphate + NADP(+) = 4-phospho-L-aspartate + NADPH + H(+). Its pathway is amino-acid biosynthesis; L-lysine biosynthesis via DAP pathway; (S)-tetrahydrodipicolinate from L-aspartate: step 2/4. The protein operates within amino-acid biosynthesis; L-methionine biosynthesis via de novo pathway; L-homoserine from L-aspartate: step 2/3. It functions in the pathway amino-acid biosynthesis; L-threonine biosynthesis; L-threonine from L-aspartate: step 2/5. Catalyzes the NADPH-dependent formation of L-aspartate-semialdehyde (L-ASA) by the reductive dephosphorylation of L-aspartyl-4-phosphate. In Aquifex aeolicus (strain VF5), this protein is Aspartate-semialdehyde dehydrogenase.